A 150-amino-acid chain; its full sequence is Bcl-2-interacting killer (150 aa).

A BH3 motif is present at residues 51–65 (VALRLACIGDEMDLC). The helical transmembrane segment at 127–147 (PGQLFPMVLLVFLLLGGAWYL) threads the bilayer. The leucine-zipper stretch occupies residues 127-148 (PGQLFPMVLLVFLLLGGAWYLQ).

As to quaternary structure, interacts with RHBDL4/RHBDD1. Interacts with BCL2L10/BCL-B. Proteolytically cleaved by RHBDL4/RHBDD1. RHBDL4/RHBDD1-induced cleavage is a necessary step prior its degradation by the proteosome-dependent mechanism. Post-translationally, ubiquitinated by the ECS(ASB11) complex in response to endoplasmic reticulum stress, leading to substrate recognition by the segregase p97/VCP and degradation by the proteasome. In terms of tissue distribution, expressed in testis, kidney, liver, lung and heart.

Its subcellular location is the endomembrane system. The protein localises to the mitochondrion membrane. Accelerates programmed cell death. Binding to the apoptosis repressors Bcl-X(L), BHRF1 or Bcl-2 suppresses this death-promoting activity. This chain is Bcl-2-interacting killer (Bik), found in Mus musculus (Mouse).